Reading from the N-terminus, the 243-residue chain is Segregation and condensation protein A (243 aa).

This sequence belongs to the ScpA family. Component of a cohesin-like complex composed of ScpA, ScpB and the Smc homodimer, in which ScpA and ScpB bind to the head domain of Smc. The presence of the three proteins is required for the association of the complex with DNA.

Its subcellular location is the cytoplasm. Its function is as follows. Participates in chromosomal partition during cell division. May act via the formation of a condensin-like complex containing Smc and ScpB that pull DNA away from mid-cell into both cell halves. The polypeptide is Segregation and condensation protein A (Staphylococcus epidermidis (strain ATCC 35984 / DSM 28319 / BCRC 17069 / CCUG 31568 / BM 3577 / RP62A)).